Here is a 331-residue protein sequence, read N- to C-terminus: Autoinducer 2 import system permease protein LsrC (331 aa).

9 helical membrane-spanning segments follow: residues 14–34 (LIAILCLFGLLSVIDHQYFSL), 39–59 (LVFSSAQILILLAIGATLVML), 70–90 (IAGLCAVIMGMSLNAGFNLPV), 93–113 (LLTLLLGMCAGFINGALVTWL), 115–135 (IPAIVTTLGTLGLYRGLMLLL), 157–177 (LNISPIGWLLMILILAMAWIL), 206–226 (IQIIAFSVNGIMAALAGIVFA), 252–272 (GISLLGGTGTVIGAILGAFFL), and 284–304 (LPAWWNDFIAGFVLLAVLIFD).

This sequence belongs to the binding-protein-dependent transport system permease family. AraH/RbsC subfamily. In terms of assembly, the complex is composed of two ATP-binding proteins (LsrA), two transmembrane proteins (LsrC and LsrD) and a solute-binding protein (LsrB).

The protein localises to the cell inner membrane. Part of the ABC transporter complex LsrABCD involved in autoinducer 2 (AI-2) import. Probably responsible for the translocation of the substrate across the membrane. The protein is Autoinducer 2 import system permease protein LsrC (lsrC) of Photorhabdus luminescens (Xenorhabdus luminescens).